Reading from the N-terminus, the 132-residue chain is Small ribosomal subunit protein uS8 (132 aa).

Belongs to the universal ribosomal protein uS8 family. As to quaternary structure, part of the 30S ribosomal subunit. Contacts proteins S5 and S12.

One of the primary rRNA binding proteins, it binds directly to 16S rRNA central domain where it helps coordinate assembly of the platform of the 30S subunit. The sequence is that of Small ribosomal subunit protein uS8 from Xanthomonas oryzae pv. oryzae (strain MAFF 311018).